Consider the following 1021-residue polypeptide: Sodium/potassium-transporting ATPase subunit alpha-1 (1021 aa).

The propeptide occupies 1-5 (MGKGV). Basic and acidic residues predominate over residues 1–11 (MGKGVGRDKYE). The disordered stretch occupies residues 1–36 (MGKGVGRDKYEPAAVSEHGDKKKAKKERDMDELKKE). Over 4-85 (GVGRDKYEPA…NALTPPPTTP (82 aa)) the chain is Cytoplasmic. N6-acetyllysine is present on Lys9. Position 10 is a phosphotyrosine (Tyr10). Ser16 bears the Phosphoserine; by PKC mark. Lys21 carries the post-translational modification N6-acetyllysine. Over residues 26–36 (KERDMDELKKE) the composition is skewed to basic and acidic residues. A phosphoserine mark is found at Ser38 and Ser45. The phosphoinositide-3 kinase binding stretch occupies residues 80-82 (PPP). The chain crosses the membrane as a helical span at residues 86–106 (EWVKFCRQLFGGFSMLLWIGA). At 107–129 (ILCFLAYGIQAATEEEPQNDNLY) the chain is on the extracellular side. Residues 130–150 (LGVVLSAVVIITGCFSYYQEA) form a helical membrane-spanning segment. The Cytoplasmic segment spans residues 151–286 (KSSKIMESFK…GGQTPIAAEI (136 aa)). The tract at residues 214-233 (SSLTGESEPQTRSPDFTNEN) is disordered. The residue at position 226 (Ser226) is a Phosphoserine. Tyr258 carries the phosphotyrosine modification. Residues 287–306 (EHFIHIITGVAVFLGVSFFI) traverse the membrane as a helical segment. The Extracellular portion of the chain corresponds to 307-318 (LSLILEYTWLEA). A helical membrane pass occupies residues 319–336 (VIFLIGIIVANVPEGLLA). Residues 337–770 (TVTVCLTLTA…EEGRLIFDNL (434 aa)) lie on the Cytoplasmic side of the membrane. Asp374 serves as the catalytic 4-aspartylphosphate intermediate. Phosphoserine is present on residues Ser450 and Ser482. Lys485 lines the ATP pocket. Tyr540 is modified (phosphotyrosine). Residues 594–715 (RAAVPDAVGK…QGAIVAVTGD (122 aa)) form a mediates interaction with SCN7A region. Lys659 bears the N6-succinyllysine mark. 2 positions are modified to phosphoserine: Ser666 and Ser673. Asp715 and Asp719 together coordinate Mg(2+). The chain crosses the membrane as a helical span at residues 771–790 (KKSIAYTLTSNIPEITPFLI). Residues 791-800 (FIIANIPLPL) are Extracellular-facing. Residues 801–821 (GTVTILCIDLGTDMVPAISLA) traverse the membrane as a helical segment. At 822 to 841 (YEQAESDIMKRQPRNPKTDK) the chain is on the cytoplasmic side. Residues 842-864 (LVNERLISMAYGQIGMIQALGGF) form a helical membrane-spanning segment. Residues 865 to 916 (FTYFVILAENGFLPTHLLGLRVDWDDRWINDVEDSYGQQWTYEQRKIVEFTC) lie on the Extracellular side of the membrane. The chain crosses the membrane as a helical span at residues 917–936 (HTAFFVSIVVVQWADLVICK). Residues 937 to 949 (TRRNSVFQQGMKN) lie on the Cytoplasmic side of the membrane. Residue Ser941 is modified to Phosphoserine; by PKA. The chain crosses the membrane as a helical span at residues 950–968 (KILIFGLFEETALAAFLSY). At 969–983 (CPGMGVALRMYPLKP) the chain is on the extracellular side. The helical transmembrane segment at 984 to 1004 (TWWFCAFPYSLLIFVYDEVRK) threads the bilayer. The Cytoplasmic portion of the chain corresponds to 1005–1021 (LIIRRRPGGWVEKETYY).

The protein belongs to the cation transport ATPase (P-type) (TC 3.A.3) family. Type IIC subfamily. The sodium/potassium-transporting ATPase is composed of a catalytic alpha subunit, an auxiliary non-catalytic beta subunit and an additional regulatory subunit. Interacts with regulatory subunit FXYD1. Interacts with regulatory subunit FXYD3. Interacts with SIK1. Interacts with SLC35G1 and STIM1. Interacts with CLN3; this interaction regulates the sodium/potassium-transporting ATPase complex localization at the plasma membrane. Interacts with SCN7A; activates ATP1A1 P-type sodium:potassium-exchanging transporter activity which indirectly signals to nearby neurons to regulate sodium homeostasis. Phosphorylation on Tyr-10 modulates pumping activity. Phosphorylation of Ser-941 by PKA modulates the response of ATP1A1 to PKC. Dephosphorylation by protein phosphatase 2A (PP2A) following increases in intracellular sodium, leading to increase catalytic activity.

It is found in the cell membrane. The protein resides in the basolateral cell membrane. The protein localises to the sarcolemma. It localises to the cell projection. Its subcellular location is the axon. It is found in the melanosome. The catalysed reaction is K(+)(out) + Na(+)(in) + ATP + H2O = K(+)(in) + Na(+)(out) + ADP + phosphate + H(+). Its function is as follows. This is the catalytic component of the active enzyme, which catalyzes the hydrolysis of ATP coupled with the exchange of sodium and potassium ions across the plasma membrane. This action creates the electrochemical gradient of sodium and potassium ions, providing the energy for active transport of various nutrients. Could also be part of an osmosensory signaling pathway that senses body-fluid sodium levels and controls salt intake behavior as well as voluntary water intake to regulate sodium homeostasis. This Canis lupus familiaris (Dog) protein is Sodium/potassium-transporting ATPase subunit alpha-1 (ATP1A1).